A 191-amino-acid chain; its full sequence is Ion-translocating oxidoreductase complex subunit B (191 aa).

The segment at 1–26 is hydrophobic; the sequence is MSSLWIAIAAVSAIALVSGLILGFAA. A 4Fe-4S domain is found at 32–90; the sequence is EADPIVERIDALLPQSQCGQCGYPGCRPYAEAVANGEKINRCAPGGEAVMRNIAALLAV. [4Fe-4S] cluster is bound by residues Cys49, Cys52, Cys57, Cys73, Cys116, Cys119, Cys122, Cys126, Cys146, Cys149, Cys152, and Cys156. 4Fe-4S ferredoxin-type domains lie at 107–136 and 137–166; these read QVAL…GATR and ALHT…LVPV.

It belongs to the 4Fe4S bacterial-type ferredoxin family. RnfB subfamily. The complex is composed of six subunits: RnfA, RnfB, RnfC, RnfD, RnfE and RnfG. [4Fe-4S] cluster serves as cofactor.

The protein localises to the cell inner membrane. Functionally, part of a membrane-bound complex that couples electron transfer with translocation of ions across the membrane. The protein is Ion-translocating oxidoreductase complex subunit B of Edwardsiella ictaluri (strain 93-146).